Reading from the N-terminus, the 98-residue chain is U-megalopygitoxin(1)-Mo1 (98 aa).

The N-terminal stretch at 1-17 (MYRETFVFCVLLAVVSA) is a signal peptide.

This sequence belongs to the caterpillar 1 family. Post-translationally, contains 4 disulfide bonds. In terms of tissue distribution, expressed by the venom apparatus.

The protein localises to the secreted. Probable toxin. The chain is U-megalopygitoxin(1)-Mo1 from Megalopyge opercularis (Southern flannel moth).